A 492-amino-acid chain; its full sequence is UDP-N-acetylmuramoyl-L-alanyl-D-glutamate--2,6-diaminopimelate ligase (492 aa).

Ser-30 contacts UDP-N-acetyl-alpha-D-muramoyl-L-alanyl-D-glutamate. 114–120 (GTNGKTS) provides a ligand contact to ATP. UDP-N-acetyl-alpha-D-muramoyl-L-alanyl-D-glutamate is bound by residues 156 to 157 (TT), Ser-183, Gln-189, and Arg-191. Lys-223 carries the N6-carboxylysine modification. Residues Arg-389, 413-416 (DNPR), Gly-462, and Glu-466 each bind meso-2,6-diaminopimelate. Positions 413-416 (DNPR) match the Meso-diaminopimelate recognition motif motif.

This sequence belongs to the MurCDEF family. MurE subfamily. Mg(2+) is required as a cofactor. Carboxylation is probably crucial for Mg(2+) binding and, consequently, for the gamma-phosphate positioning of ATP.

The protein resides in the cytoplasm. The enzyme catalyses UDP-N-acetyl-alpha-D-muramoyl-L-alanyl-D-glutamate + meso-2,6-diaminopimelate + ATP = UDP-N-acetyl-alpha-D-muramoyl-L-alanyl-gamma-D-glutamyl-meso-2,6-diaminopimelate + ADP + phosphate + H(+). It participates in cell wall biogenesis; peptidoglycan biosynthesis. In terms of biological role, catalyzes the addition of meso-diaminopimelic acid to the nucleotide precursor UDP-N-acetylmuramoyl-L-alanyl-D-glutamate (UMAG) in the biosynthesis of bacterial cell-wall peptidoglycan. The sequence is that of UDP-N-acetylmuramoyl-L-alanyl-D-glutamate--2,6-diaminopimelate ligase from Neisseria meningitidis serogroup B (strain ATCC BAA-335 / MC58).